The following is a 363-amino-acid chain: tRNA N6-adenosine threonylcarbamoyltransferase (363 aa).

Residues histidine 121 and histidine 125 each contribute to the Fe cation site. Substrate contacts are provided by residues 143–147 (LASGG), aspartate 176, glycine 189, and asparagine 287. Fe cation is bound at residue aspartate 315.

It belongs to the KAE1 / TsaD family. Requires Fe(2+) as cofactor.

It localises to the cytoplasm. It catalyses the reaction L-threonylcarbamoyladenylate + adenosine(37) in tRNA = N(6)-L-threonylcarbamoyladenosine(37) in tRNA + AMP + H(+). Its function is as follows. Required for the formation of a threonylcarbamoyl group on adenosine at position 37 (t(6)A37) in tRNAs that read codons beginning with adenine. Is involved in the transfer of the threonylcarbamoyl moiety of threonylcarbamoyl-AMP (TC-AMP) to the N6 group of A37, together with TsaE and TsaB. TsaD likely plays a direct catalytic role in this reaction. This is tRNA N6-adenosine threonylcarbamoyltransferase from Rhodopseudomonas palustris (strain BisB5).